Here is a 597-residue protein sequence, read N- to C-terminus: Blastula protease 10 (597 aa).

Residues 1 to 16 (MKLILFLSGLVSLVLC) form the signal peptide. Residues 17–93 (TLAAPTGDQK…DEMTGRKKRK (77 aa)) constitute a propeptide, activation peptide. Residues 24–67 (DQKEIHTETPPPKKPSETTTPGALKTPQPEPKDEEPTPGAFQGD) are disordered. Positions 93–294 (KATIYESQRW…ELANLIYECD (202 aa)) constitute a Peptidase M12A domain. Cystine bridges form between cysteine 134–cysteine 293, cysteine 162–cysteine 182, cysteine 299–cysteine 315, cysteine 305–cysteine 317, cysteine 319–cysteine 328, cysteine 339–cysteine 365, cysteine 392–cysteine 412, cysteine 484–cysteine 510, and cysteine 537–cysteine 557. Histidine 190 is a binding site for Zn(2+). The active site involves glutamate 191. 2 residues coordinate Zn(2+): histidine 194 and histidine 200. Residues 295–329 (DIEDCAGANECLNGGYHDTECNCVCPSGYNGDLCE) enclose the EGF-like domain. 2 consecutive CUB domains span residues 339-449 (CSER…YRIV) and 484-595 (CGGS…YRAI).

Zn(2+) is required as a cofactor.

The protein resides in the cytoplasm. It localises to the perinuclear region. The protein localises to the cell cortex. Its subcellular location is the secreted. It is found in the extracellular space. Its function is as follows. Could be involved in the differentiation of ectodermal lineages and subsequent patterning of the embryo. This Paracentrotus lividus (Common sea urchin) protein is Blastula protease 10 (BP10).